A 753-amino-acid chain; its full sequence is MEGPEITFAEAVIDNGSYGKRTVRFETGRLAQQAAGAAMVYLDEETSMLSATTVGKSPREGFDFFPLTVDVEERMYASGRIPGSFFRREGRPSTDAILTCRLIDRPLRPAFVKGIRNEVQVVVTVTSIAPDEIYDTVAINAASLSTQLSGLPFSGPIGGVRMALMDDGSGARQWVAFPKHSQLKGAVFNMAVAGRVVGDDVAIMMVEAEATPDSWTLVKERGAQAPTEEIVAEGLEAAKPFIRALCEAQADLVKRAGKDPVDVPVFQDYQDDAYAAVEKLATDRLTEIFSIADKQERESASYAYLLEVLEELAGEGKDFAERKGEIAKAYGSLTKQIVRRRILTDQVRIDGRGLTDIRKLTAEVEVLPRVHGSAIFERGETQIMGVTTLNMLKMEQQIDSLSPETAKRYMHHYNFPPYSTGETGRVGSPKRREIGHGALAERALVPVLPAREEFPYAIRQVSEALSSNGSTSMGSVCASTLSLLNAGVPLRAHVAGIAMGLVSAEVDGQTQYAALTDILGAEDAFGDMDFKVAGTAEFVTAIQLDTKLDGIPASVLASALTQAREARLHILSVLNAAIDAPDEMAPTAPRIISVRIPVDKIGAVIGPKGAMINQIQDDTGADITIEDDGTVLIGATDGASAEAARSAVNAIANPQVPEVGERYLGTVVKLTTFGAFVSLTPGKDGLLHVSELRKLNEGKRVDDVEDVLGVGQKVQVEITKIDDRGKLSLSPVGAESDAVAETADAIESSQTEA.

Mg(2+) contacts are provided by aspartate 523 and aspartate 529. One can recognise a KH domain in the interval 589–648 (PRIISVRIPVDKIGAVIGPKGAMINQIQDDTGADITIEDDGTVLIGATDGASAEAARSAV). Residues 660–732 (GERYLGTVVK…DRGKLSLSPV (73 aa)) form the S1 motif domain. The interval 733 to 753 (GAESDAVAETADAIESSQTEA) is disordered.

The protein belongs to the polyribonucleotide nucleotidyltransferase family. Requires Mg(2+) as cofactor.

It localises to the cytoplasm. It catalyses the reaction RNA(n+1) + phosphate = RNA(n) + a ribonucleoside 5'-diphosphate. Its function is as follows. Involved in mRNA degradation. Catalyzes the phosphorolysis of single-stranded polyribonucleotides processively in the 3'- to 5'-direction. The sequence is that of Polyribonucleotide nucleotidyltransferase from Micrococcus luteus (strain ATCC 4698 / DSM 20030 / JCM 1464 / CCM 169 / CCUG 5858 / IAM 1056 / NBRC 3333 / NCIMB 9278 / NCTC 2665 / VKM Ac-2230) (Micrococcus lysodeikticus).